Here is a 201-residue protein sequence, read N- to C-terminus: Glycerol-3-phosphate acyltransferase (201 aa).

The next 5 membrane-spanning stretches (helical) occupy residues 10 to 30, 60 to 80, 86 to 106, 116 to 136, and 166 to 186; these read MLIGALIFGYVLGSIPFGLIL, LAAATLILDALKGTAAALIAA, AAIAAGFGAFIGHLFPVWIGF, LGVLIGLAWAGALVFAAAWIV, and ALAALFAIMTVIVFIKHRANI.

It belongs to the PlsY family. In terms of assembly, probably interacts with PlsX.

The protein resides in the cell inner membrane. The catalysed reaction is an acyl phosphate + sn-glycerol 3-phosphate = a 1-acyl-sn-glycero-3-phosphate + phosphate. It functions in the pathway lipid metabolism; phospholipid metabolism. In terms of biological role, catalyzes the transfer of an acyl group from acyl-phosphate (acyl-PO(4)) to glycerol-3-phosphate (G3P) to form lysophosphatidic acid (LPA). This enzyme utilizes acyl-phosphate as fatty acyl donor, but not acyl-CoA or acyl-ACP. The polypeptide is Glycerol-3-phosphate acyltransferase (Brucella abortus (strain 2308)).